We begin with the raw amino-acid sequence, 151 residues long: Putative pre-16S rRNA nuclease (151 aa).

This sequence belongs to the YqgF nuclease family.

It localises to the cytoplasm. Could be a nuclease involved in processing of the 5'-end of pre-16S rRNA. This is Putative pre-16S rRNA nuclease from Aster yellows witches'-broom phytoplasma (strain AYWB).